We begin with the raw amino-acid sequence, 98 residues long: uncharacterized protein (98 aa).

It belongs to the IS150/IS1296 orfA family.

This is an uncharacterized protein from Haemophilus influenzae (strain ATCC 51907 / DSM 11121 / KW20 / Rd).